A 76-amino-acid polypeptide reads, in one-letter code: Conotoxin Cal5a L1 (76 aa).

A signal peptide spans 1 to 22; sequence MRFYIGLMAALMLTSILRTDSA. Positions 23-42 are excised as a propeptide; the sequence is SVDQTGAEGGLALIERVIRQ. The residue at position 50 (Pro-50) is a 4-hydroxyproline. Pro-58 is modified (4-hydroxyproline; in form cal5a, and form cal5b). Residue Pro-62 is modified to 4-hydroxyproline; in form cal5a, form cal5b, and form cal5c. Pro-64 is subject to 4-hydroxyproline; in form cal5a, form cal5b, form cal5c, and form cal5d.

Contains 2 disulfide bonds that can be either 'C1-C3, C2-C4' or 'C1-C4, C2-C3', since these disulfide connectivities have been observed for conotoxins with cysteine framework V (for examples, see AC P0DQQ7 and AC P81755). In terms of processing, five different peptides have been described after total venom examination by HPLC-MS. Cal5a is the longest. Cal5b-Cal5e are identical in length but are differentially hydroxylated. It is possible that hydroxylation and proteolysis at position 53 are incomplete in some of these peptides. Expressed by the venom duct.

The protein resides in the secreted. Its function is as follows. Probable neurotoxin with unknown target. Possibly targets ion channels. The sequence is that of Conotoxin Cal5a L1 from Californiconus californicus (California cone).